Consider the following 400-residue polypeptide: Enoyl-[acyl-carrier-protein] reductase [NADH] (400 aa).

NAD(+) is bound by residues 48-53 (GASTGY), 74-75 (FE), 111-112 (DA), and 139-140 (LA). Tyr225 provides a ligand contact to substrate. Tyr235 (proton donor) is an active-site residue. Residues Lys244 and 273–275 (VVT) contribute to the NAD(+) site.

It belongs to the TER reductase family. As to quaternary structure, monomer.

It catalyses the reaction a 2,3-saturated acyl-[ACP] + NAD(+) = a (2E)-enoyl-[ACP] + NADH + H(+). It participates in lipid metabolism; fatty acid biosynthesis. Its function is as follows. Involved in the final reduction of the elongation cycle of fatty acid synthesis (FAS II). Catalyzes the reduction of a carbon-carbon double bond in an enoyl moiety that is covalently linked to an acyl carrier protein (ACP). The chain is Enoyl-[acyl-carrier-protein] reductase [NADH] from Burkholderia ambifaria (strain MC40-6).